A 695-amino-acid polypeptide reads, in one-letter code: MESNYSGVVNGYDVSFLPTSIPDLGFGVPSSSDFDLRMDQYYHQPSIWVPDQDHHFSPPADEIDSENTLLKYVNQLLMEESLAEKQSIFYDSLALRQTEEMLQQVISDSQTQSSIPNNSITTSSSSNSGDYSNSSNSSVRIENEVLFDNKHLGDSGVVSFPGSNMLRGGEQFGQPANEILVRSMFSDAESVLQFKRGLEEASKFLPNTDQWIFNLEPEMERVVPVKVEEGWSAISKTRKNHHEREEEEDDLEEARRRSKQFAVNEEDGKLTEMFDKVLLLDGECDPQIIEDGENGSSKALVKKGRAKKKSRAVDFRTLLTLCAQSVSAGDKITADDLLRQIRKQCSPVGDASQRLAHFFANALEARLEGSTGTMIQSYYDSISSKKRTAAQILKSYSVFLSASPFMTLIYFFSNKMILDAAKDASVLHIVDFGILYGFQWPMFIQHLSKSNPGLRKLRITGIEIPQHGLRPTERIQDTGRRLTEYCKRFGVPFEYNAIASKNWETIKMEEFKIRPNEVLAVNAVLRFKNLRDVIPGEEDCPRDGFLKLIRDMNPNVFLSSTVNGSFNAPFFTTRFKEALFHYSALFDLFGATLSKENPERIHFEGEFYGREVMNVIACEGVDRVERPETYKQWQVRMIRAGFKQKPVEAELVQLFREKMKKWGYHKDFVLDEDSNWFLQGWKGRILFSSSCWVPS.

Disordered regions lie at residues valine 105 to asparagine 136 and isoleucine 234 to glutamine 260. The span at serine 113–asparagine 136 shows a compositional bias: low complexity. The stretch at alanine 233–glutamate 266 forms a coiled coil. Residues alanine 306–valine 693 form the GRAS domain. The tract at residues valine 313–serine 377 is leucine repeat I (LRI). The segment at tyrosine 396–glycine 461 is VHIID. The VHIID signature appears at leucine 427 to aspartate 431. The segment at aspartate 477–glutamate 509 is leucine repeat II (LRII). The tract at residues leucine 519–asparagine 614 is PFYRE. The segment at alanine 617–valine 693 is SAW.

Belongs to the GRAS family. Expressed in seedlings, roots, cotyledons, leaves and sepals.

The protein resides in the nucleus. Functionally, probable transcription factor involved in plant development. This chain is Scarecrow-like protein 31 (SCL31), found in Arabidopsis thaliana (Mouse-ear cress).